The primary structure comprises 540 residues: MGTTARAALVLTYLAVASAASEGGFTATGQRQLRPEHFQEVGYAAPPSPPLSRSLPMDHPDSSQHGPPFEGQSQVQPPPSQEATPLQQEKLLPAQLPAEKEVGPPLPQEAVPLQKELPSLQHPNEQKEGTPAPFGDQSHPEPESWNAAQHCQQDRSQGGWGHRLDGFPPGRPSPDNLNQICLPNRQHVVYGPWNLPQSSYSHLTRQGETLNFLEIGYSRCCHCRSHTNRLECAKLVWEEAMSRFCEAEFSVKTRPHWCCTRQGEARFSCFQEEAPQPHYQLRACPSHQPDISSGLELPFPPGVPTLDNIKNICHLRRFRSVPRNLPATDPLQRELLALIQLEREFQRCCRQGNNHTCTWKAWEDTLDKYCDREYAVKTHHHLCCRHPPSPTRDECFARRAPYPNYDRDILTIDIGRVTPNLMGHLCGNQRVLTKHKHIPGLIHNMTARCCDLPFPEQACCAEEEKLTFINDLCGPRRNIWRDPALCCYLSPGDEQVNCFNINYLRNVALVSGDTENAKGQGEQGSTGGTNISSTSEPKEE.

The signal sequence occupies residues 1-19 (MGTTARAALVLTYLAVASA). 2 disordered regions span residues 41 to 85 (VGYA…EATP) and 120 to 175 (LQHP…PSPD). Composition is skewed to polar residues over residues 71-85 (GQSQ…EATP) and 146-156 (NAAQHCQQDRS). 2 tandem repeats follow at residues 150 to 279 (HCQQ…QPHY) and 283 to 405 (ACPS…YPNY). The tract at residues 150–405 (HCQQDRSQGG…FARRAPYPNY (256 aa)) is 2 X approximate repeats. Asn354 is a glycosylation site (N-linked (GlcNAc...) asparagine). An N-linked (GlcNAc...) (complex) asparagine glycan is attached at Asn444. Residues 515–540 (ENAKGQGEQGSTGGTNISSTSEPKEE) form a disordered region. Over residues 528 to 540 (GTNISSTSEPKEE) the composition is skewed to low complexity. A glycan (N-linked (GlcNAc...) asparagine) is linked at Asn530.

As to quaternary structure, interacts (via C-terminus) with HSPG2 (via C-terminus). Interacts with EFEMP1/FBLN3 and LAMB3. Interacts with MMP9. In terms of tissue distribution, expressed in breast cancer tissues. Little or no expression observed in normal breast tissues. Expressed in skin; wide expression is observed throughout the dermis with minimal expression in the epidermis.

The protein localises to the secreted. It localises to the extracellular space. It is found in the extracellular matrix. Its function is as follows. Involved in endochondral bone formation as negative regulator of bone mineralization. Stimulates the proliferation of endothelial cells and promotes angiogenesis. Inhibits MMP9 proteolytic activity. The chain is Extracellular matrix protein 1 (ECM1) from Homo sapiens (Human).